The chain runs to 375 residues: 23S rRNA (uracil(747)-C(5))-methyltransferase RlmC (375 aa).

Residues C3, C11, C14, and C87 each coordinate [4Fe-4S] cluster. S-adenosyl-L-methionine contacts are provided by Q212, F241, E262, and N307. C334 serves as the catalytic Nucleophile.

It belongs to the class I-like SAM-binding methyltransferase superfamily. RNA M5U methyltransferase family. RlmC subfamily.

The catalysed reaction is uridine(747) in 23S rRNA + S-adenosyl-L-methionine = 5-methyluridine(747) in 23S rRNA + S-adenosyl-L-homocysteine + H(+). In terms of biological role, catalyzes the formation of 5-methyl-uridine at position 747 (m5U747) in 23S rRNA. The sequence is that of 23S rRNA (uracil(747)-C(5))-methyltransferase RlmC from Escherichia coli O6:H1 (strain CFT073 / ATCC 700928 / UPEC).